The chain runs to 194 residues: MGVTPVSNEPLVAQQPKGIIDPSTGKPIGSNDAFFGEINNELADKGFLVTSTDELINWARTGSLMWMTFGLACCAVEMMQLSMPRYDVERFGFAPRASPRQSDVMIVAGTLTNKMAPALRKVYDQMPEPRYVISMGSCANGGGYYHYSYSVVRGCDRVVPIDIYVPGCPPTAEALLYGVLLLQKKIRRTGTIER.

4 residues coordinate [4Fe-4S] cluster: Cys73, Cys74, Cys138, and Cys168.

Belongs to the complex I 20 kDa subunit family. In terms of assembly, NDH-1 is composed of 14 different subunits. Subunits NuoB, C, D, E, F, and G constitute the peripheral sector of the complex. [4Fe-4S] cluster is required as a cofactor.

It is found in the cell inner membrane. It catalyses the reaction a quinone + NADH + 5 H(+)(in) = a quinol + NAD(+) + 4 H(+)(out). Functionally, NDH-1 shuttles electrons from NADH, via FMN and iron-sulfur (Fe-S) centers, to quinones in the respiratory chain. The immediate electron acceptor for the enzyme in this species is believed to be ubiquinone. Couples the redox reaction to proton translocation (for every two electrons transferred, four hydrogen ions are translocated across the cytoplasmic membrane), and thus conserves the redox energy in a proton gradient. This is NADH-quinone oxidoreductase subunit B 1 from Rhizobium etli (strain CIAT 652).